A 162-amino-acid chain; its full sequence is Disulfide bond formation protein B (162 aa).

The Cytoplasmic segment spans residues Met-1–Ile-4. Residues Phe-5–Tyr-21 form a helical membrane-spanning segment. At Leu-22–Ile-39 the chain is on the periplasmic side. Cys-31 and Cys-34 form a disulfide bridge. A helical transmembrane segment spans residues Ala-40–Pro-56. Over Gln-57–His-62 the chain is Cytoplasmic. Residues Ile-63–Gly-80 traverse the membrane as a helical segment. At Arg-81–Asp-136 the chain is on the periplasmic side. Cys-94 and Cys-122 are oxidised to a cystine. The helical transmembrane segment at Trp-137 to Lys-155 threads the bilayer. At Lys-156–Gln-162 the chain is on the cytoplasmic side.

This sequence belongs to the DsbB family.

Its subcellular location is the cell inner membrane. Functionally, required for disulfide bond formation in some periplasmic proteins. Acts by oxidizing the DsbA protein. The protein is Disulfide bond formation protein B of Nitrosomonas eutropha (strain DSM 101675 / C91 / Nm57).